A 66-amino-acid chain; its full sequence is Phylloseptin-S1 (66 aa).

The N-terminal stretch at 1–22 (MAFLKKSLFLVLFLGLVSLSIC) is a signal peptide. The propeptide occupies 23 to 46 (EEEKRETEEEEHDQEEDDKSEEKR). The tract at residues 25–44 (EKRETEEEEHDQEEDDKSEE) is disordered. Over residues 30-41 (EEEEHDQEEDDK) the composition is skewed to acidic residues. Position 65 is a phenylalanine amide (Phe65).

Expressed by the skin glands.

It is found in the secreted. The protein resides in the target cell membrane. Functionally, antimicrobial peptide with high activity against Gram-positive bacteria, low activity against Gram-negative bacteria, and moderate activity against fungi. Acts on bacterial biofilms (S.aureus) with the same potency than on bacteria. Acts by causing bacterial membrane disruption inducing leakage of the intracellular content followed by cell death. It adopts an alpha-helical amphipathic structure in membrane environments. Also shows highly potent antiparasitic activity against Leishmania species. Shows low hemolytic activity on horse and human erythrocytes (LC(50)=39 uM). Is also active on human monocytes (IC(50)=23 uM). In Phyllomedusa sauvagei (Sauvage's leaf frog), this protein is Phylloseptin-S1.